A 745-amino-acid polypeptide reads, in one-letter code: Arf-GAP with coiled-coil, ANK repeat and PH domain-containing protein 1 (745 aa).

The BAR domain maps to 1–226 (MTVKLDFEEC…RKELGGQLHQ (226 aa)). The tract at residues 1–382 (MTVKLDFEEC…RGLGQGSGHL (382 aa)) is required for formation of endosomal tubules when overexpressed with PIP5K1C. The 96-residue stretch at 265-360 (GLVMEGHLFK…WVSAVQSSIA (96 aa)) folds into the PH domain. The Arf-GAP domain occupies 405 to 527 (GHVAAQVQSV…KFLTKLPEIR (123 aa)). The required for interaction with GULP1 stretch occupies residues 405–745 (GHVAAQVQSV…SRRSHDLHTL (341 aa)). The C4-type zinc finger occupies 420-443 (CCDCREPAPEWASINLGVTLCIQC). At Tyr-485 the chain carries 3'-nitrotyrosine. The segment at 525–567 (EIRGRRGGRGPPRGHPPVPPKPGLIRPKPGSFRSKPEPPSEDL) is prevents interaction with ITGB1 when S-554 is not phosphorylated. A disordered region spans residues 525 to 569 (EIRGRRGGRGPPRGHPPVPPKPGLIRPKPGSFRSKPEPPSEDLQS). The span at 537-546 (RGHPPVPPKP) shows a compositional bias: pro residues. Ser-555 bears the Phosphoserine; by PKB mark. ANK repeat units follow at residues 607–640 (ENAT…NVNQ), 644–673 (QGRG…DLGV), and 677–707 (EGRD…EADA).

As to quaternary structure, banana-shaped homodimer laterally assembling into tetramers, the tetramers further pack helically onto the membrane. Interacts with GTP-bound ARF6. Interacts with third cytoplasmic loop of SLC2A4/GLUT4. Interacts with CLTC. Interacts with GULP1. Forms a complex with GDP-bound ARF6 and GULP1. Interacts with ITGB1; required for ITGB1 recycling. Phosphorylation at Ser-555 by PKB is required for interaction with ITGB1, export of ITGB1 from recycling endosomes to the cell surface and ITGB1-dependent cell migration.

The protein localises to the recycling endosome membrane. With respect to regulation, GAP activity stimulated by phosphatidylinositol 4,5-bisphosphate (PIP2) and phosphatidic acid. Its function is as follows. GTPase-activating protein (GAP) for ADP ribosylation factor 6 (ARF6) required for clathrin-dependent export of proteins from recycling endosomes to trans-Golgi network and cell surface. Required for regulated export of ITGB1 from recycling endosomes to the cell surface and ITGB1-dependent cell migration. This is Arf-GAP with coiled-coil, ANK repeat and PH domain-containing protein 1 (ACAP1) from Bos taurus (Bovine).